The following is a 244-amino-acid chain: Probable transcriptional regulatory protein CHAB381_1426 (244 aa).

It belongs to the TACO1 family.

The protein resides in the cytoplasm. This Campylobacter hominis (strain ATCC BAA-381 / DSM 21671 / CCUG 45161 / LMG 19568 / NCTC 13146 / CH001A) protein is Probable transcriptional regulatory protein CHAB381_1426.